The following is an 860-amino-acid chain: Putative mixed-linked glucan synthase 1 (860 aa).

2 helical membrane-spanning segments follow: residues 63–83 (ILHP…AFFA) and 93–113 (GAWL…SWVL). D183 is a catalytic residue. The stretch at 235 to 263 (ELMSDHRRVRREYEEFKVRIDSLSSTIRQ) forms a coiled coil. Positions 381 and 383 each coordinate substrate. D549 is a catalytic residue. Transmembrane regions (helical) follow at residues 625-645 (TYPI…MWLI), 655-675 (FGEY…IGMF), 693-713 (FYMI…ALKL), 747-767 (LLIP…VAVG), 781-801 (LAVL…PFAL), and 812-832 (AVLF…YVAF).

Belongs to the glycosyltransferase 2 family. Plant cellulose synthase-like F subfamily.

Its subcellular location is the golgi apparatus membrane. May catalyze both beta-1,3 and beta-1,4 glycosidic linkage on beta-D-glucan. Essential for (1,3;1,4)-beta-D-glucans synthesis in grasses and cereals (Poaceae). The mixed-linked glucans (which are not present in walls of dicotyledons or most other monocotyledonous plants) are particularly important constituents of the walls of the starchy endosperm and aleurone cells of cereal grains such as oats, wheat, rice and barley. They can account for up to 70% by weight of the wall. The sequence is that of Putative mixed-linked glucan synthase 1 (CSFL1) from Oryza sativa subsp. japonica (Rice).